We begin with the raw amino-acid sequence, 304 residues long: Haloalkane dehalogenase (304 aa).

The AB hydrolase-1 domain occupies 42–154; sequence PIVFLHGNPT…DSVDLSPEFV (113 aa). Residue D114 is the Nucleophile of the active site. E138 (proton donor) is an active-site residue. The Proton acceptor role is filled by H280.

The protein belongs to the haloalkane dehalogenase family. Type 2 subfamily. Monomer.

It carries out the reaction 1-haloalkane + H2O = a halide anion + a primary alcohol + H(+). Its function is as follows. Catalyzes hydrolytic cleavage of carbon-halogen bonds in halogenated aliphatic compounds, leading to the formation of the corresponding primary alcohols, halide ions and protons. The chain is Haloalkane dehalogenase from Agrobacterium fabrum (strain C58 / ATCC 33970) (Agrobacterium tumefaciens (strain C58)).